The primary structure comprises 128 residues: Cytochrome c-type biogenesis protein CcmE (128 aa).

Residues 1–8 lie on the Cytoplasmic side of the membrane; sequence MQKIVRNR. The chain crosses the membrane as a helical; Signal-anchor for type II membrane protein span at residues 9–29; it reads LIKIILCFCSTCLGISIILYN. The Periplasmic portion of the chain corresponds to 30-128; it reads LEKNIIFFFP…KHDENYRPPS (99 aa). Heme contacts are provided by His120 and Tyr124.

Belongs to the CcmE/CycJ family.

The protein resides in the cell inner membrane. Heme chaperone required for the biogenesis of c-type cytochromes. Transiently binds heme delivered by CcmC and transfers the heme to apo-cytochromes in a process facilitated by CcmF and CcmH. This chain is Cytochrome c-type biogenesis protein CcmE, found in Rickettsia typhi (strain ATCC VR-144 / Wilmington).